Here is a 434-residue protein sequence, read N- to C-terminus: 3-phosphoshikimate 1-carboxyvinyltransferase (434 aa).

3-phosphoshikimate contacts are provided by Lys22, Ser23, and Arg27. Phosphoenolpyruvate is bound at residue Lys22. Phosphoenolpyruvate is bound by residues Gly93 and Arg121. 6 residues coordinate 3-phosphoshikimate: Ser168, Ser169, Gln170, Ser199, Asp320, and Lys347. Residue Gln170 coordinates phosphoenolpyruvate. Asp320 acts as the Proton acceptor in catalysis. Residues Arg351, Arg395, and Lys420 each contribute to the phosphoenolpyruvate site.

This sequence belongs to the EPSP synthase family. In terms of assembly, monomer.

It localises to the cytoplasm. It carries out the reaction 3-phosphoshikimate + phosphoenolpyruvate = 5-O-(1-carboxyvinyl)-3-phosphoshikimate + phosphate. Its pathway is metabolic intermediate biosynthesis; chorismate biosynthesis; chorismate from D-erythrose 4-phosphate and phosphoenolpyruvate: step 6/7. Functionally, catalyzes the transfer of the enolpyruvyl moiety of phosphoenolpyruvate (PEP) to the 5-hydroxyl of shikimate-3-phosphate (S3P) to produce enolpyruvyl shikimate-3-phosphate and inorganic phosphate. The sequence is that of 3-phosphoshikimate 1-carboxyvinyltransferase from Cupriavidus necator (strain ATCC 17699 / DSM 428 / KCTC 22496 / NCIMB 10442 / H16 / Stanier 337) (Ralstonia eutropha).